Consider the following 251-residue polypeptide: CDP-diacylglycerol pyrophosphatase (251 aa).

A helical transmembrane segment spans residues 4–24 (AGLLFLVMIVIAVVAAGIGYW).

Belongs to the Cdh family.

It is found in the cell inner membrane. It catalyses the reaction a CDP-1,2-diacyl-sn-glycerol + H2O = a 1,2-diacyl-sn-glycero-3-phosphate + CMP + 2 H(+). It participates in phospholipid metabolism; CDP-diacylglycerol degradation; phosphatidate from CDP-diacylglycerol: step 1/1. The protein is CDP-diacylglycerol pyrophosphatase of Escherichia coli O9:H4 (strain HS).